Consider the following 129-residue polypeptide: Large-conductance mechanosensitive channel (129 aa).

3 helical membrane passes run 8-28 (FIMR…AAFT), 30-50 (IVKS…AGAV), and 67-87 (GAVL…FLII).

Belongs to the MscL family. In terms of assembly, homopentamer.

Its subcellular location is the cell membrane. Its function is as follows. Channel that opens in response to stretch forces in the membrane lipid bilayer. May participate in the regulation of osmotic pressure changes within the cell. In Oenococcus oeni (strain ATCC BAA-331 / PSU-1), this protein is Large-conductance mechanosensitive channel.